Reading from the N-terminus, the 178-residue chain is Ribose 1,5-bisphosphate phosphokinase PhnN (178 aa).

9–16 (GPSGSGKD) contributes to the ATP binding site.

Belongs to the ribose 1,5-bisphosphokinase family.

It carries out the reaction alpha-D-ribose 1,5-bisphosphate + ATP = 5-phospho-alpha-D-ribose 1-diphosphate + ADP. It participates in metabolic intermediate biosynthesis; 5-phospho-alpha-D-ribose 1-diphosphate biosynthesis; 5-phospho-alpha-D-ribose 1-diphosphate from D-ribose 5-phosphate (route II): step 3/3. In terms of biological role, catalyzes the phosphorylation of ribose 1,5-bisphosphate to 5-phospho-D-ribosyl alpha-1-diphosphate (PRPP). This chain is Ribose 1,5-bisphosphate phosphokinase PhnN, found in Pantoea vagans (strain C9-1) (Pantoea agglomerans (strain C9-1)).